A 412-amino-acid chain; its full sequence is Serine hydroxymethyltransferase (412 aa).

Residues Leu117 and Gly121 to Leu123 each bind (6S)-5,6,7,8-tetrahydrofolate. Lys226 carries the post-translational modification N6-(pyridoxal phosphate)lysine. (6S)-5,6,7,8-tetrahydrofolate contacts are provided by residues Glu242 and Ser350 to Phe352.

It belongs to the SHMT family. In terms of assembly, homodimer. Pyridoxal 5'-phosphate serves as cofactor.

The protein resides in the cytoplasm. It carries out the reaction (6R)-5,10-methylene-5,6,7,8-tetrahydrofolate + glycine + H2O = (6S)-5,6,7,8-tetrahydrofolate + L-serine. Its pathway is one-carbon metabolism; tetrahydrofolate interconversion. It participates in amino-acid biosynthesis; glycine biosynthesis; glycine from L-serine: step 1/1. Catalyzes the reversible interconversion of serine and glycine with tetrahydrofolate (THF) serving as the one-carbon carrier. Appears to be specific for THF as the pteridine substrate, since the use of tetrahydromethanopterin (H4MPT) is much less efficient. Also exhibits THF-independent aldolase activity toward beta-hydroxyamino acids, producing glycine and aldehydes, via a retro-aldol mechanism. Thus, is able to catalyze the cleavage of L-allo-threonine and L-threo-beta-phenylserine. The polypeptide is Serine hydroxymethyltransferase (Methanosarcina barkeri (strain Fusaro / DSM 804)).